The following is a 394-amino-acid chain: [Pyruvate dehydrogenase (acetyl-transferring)] kinase 1, mitochondrial (394 aa).

Residues 1-20 (MWKIMRSWKCGGMRWAHRQR) constitute a mitochondrion transit peptide. The region spanning 126 to 386 (AYPYELHNPP…DVYIKLKGPS (261 aa)) is the Histidine kinase domain. Position 148 is a phosphohistidine; by autocatalysis (histidine 148). ATP contacts are provided by residues 267–274 (EVFKNAFE), aspartate 304, 323–324 (ST), and 347–352 (GMGFGL).

It belongs to the PDK/BCKDK protein kinase family. As to quaternary structure, interacts with PKP2.

The protein resides in the mitochondrion matrix. It catalyses the reaction L-seryl-[pyruvate dehydrogenase E1 alpha subunit] + ATP = O-phospho-L-seryl-[pyruvate dehydrogenase E1 alpha subunit] + ADP + H(+). Inhibits the mitochondrial pyruvate dehydrogenase complex by phosphorylation of the E1 alpha subunit (PDA1), thus contributing to the regulation of glucose metabolism. Also involved in telomere maintenance. This is [Pyruvate dehydrogenase (acetyl-transferring)] kinase 1, mitochondrial from Saccharomyces cerevisiae (strain ATCC 204508 / S288c) (Baker's yeast).